The following is a 773-amino-acid chain: DNA gyrase subunit B (773 aa).

One can recognise a Toprim domain in the interval 416 to 530 (SEIFLVEGDS…QGHVFIAQAP (115 aa)). Residues Glu-422, Asp-495, and Asp-497 each contribute to the Mg(2+) site.

This sequence belongs to the type II topoisomerase GyrB family. Heterotetramer, composed of two GyrA and two GyrB chains. In the heterotetramer, GyrA contains the active site tyrosine that forms a transient covalent intermediate with DNA, while GyrB binds cofactors and catalyzes ATP hydrolysis. The cofactor is Mg(2+). Mn(2+) is required as a cofactor. Ca(2+) serves as cofactor.

It localises to the cytoplasm. The catalysed reaction is ATP-dependent breakage, passage and rejoining of double-stranded DNA.. A type II topoisomerase that negatively supercoils closed circular double-stranded (ds) DNA in an ATP-dependent manner to modulate DNA topology and maintain chromosomes in an underwound state. Negative supercoiling favors strand separation, and DNA replication, transcription, recombination and repair, all of which involve strand separation. Also able to catalyze the interconversion of other topological isomers of dsDNA rings, including catenanes and knotted rings. Type II topoisomerases break and join 2 DNA strands simultaneously in an ATP-dependent manner. This chain is DNA gyrase subunit B, found in Helicobacter pylori (strain J99 / ATCC 700824) (Campylobacter pylori J99).